We begin with the raw amino-acid sequence, 166 residues long: uncharacterized protein (166 aa).

Residues 2 to 82 (DNWVCYLIMS…KRLSKKRNIQ (81 aa)) enclose the GIY-YIG domain. Residues 23 to 43 (NNRQRRLNDHNNLNPSRKGAK) form a disordered region.

This is an uncharacterized protein from Acanthamoeba polyphaga mimivirus (APMV).